We begin with the raw amino-acid sequence, 249 residues long: MVDSKKTETPQVVDASKKAENSKTSQAGRIQFLSAPKQFSASDVRSSPSLADLDEIAYEVRTTSIASPAEIEAVCQLWIRNTEIPADKVALIAIDMARAYADVGASRKAVLLDAPTLAPTVARSRLAQLKAGAGISPRQFCSYYAKIVWNLMLHKNEPPANWAKIGFKEDYKFAAFDFFDAVDSPAALEPSQWVRHPTDKERAAHGVVKWASLSRERLQEGTSITTVAELNKGHLGGYNNLPALMAPPS.

Positions M1–G28 are disordered.

This sequence belongs to the potexvirus capsid protein family.

The protein resides in the virion. Its function is as follows. Required for genome encapsidation. Forms ribonucleoprotein complexes along with TGB1 helicase and viral RNA. The chain is Coat protein from Solanum tuberosum (Potato).